The chain runs to 196 residues: RNA pyrophosphohydrolase (196 aa).

The 144-residue stretch at G6–K149 folds into the Nudix hydrolase domain. The short motif at G38–G59 is the Nudix box element.

This sequence belongs to the Nudix hydrolase family. RppH subfamily. A divalent metal cation serves as cofactor.

In terms of biological role, accelerates the degradation of transcripts by removing pyrophosphate from the 5'-end of triphosphorylated RNA, leading to a more labile monophosphorylated state that can stimulate subsequent ribonuclease cleavage. This chain is RNA pyrophosphohydrolase, found in Haemophilus influenzae (strain PittEE).